A 161-amino-acid chain; its full sequence is Nucleotide-binding protein Pnuc_0290 (161 aa).

It belongs to the YajQ family.

Nucleotide-binding protein. The sequence is that of Nucleotide-binding protein Pnuc_0290 from Polynucleobacter asymbioticus (strain DSM 18221 / CIP 109841 / QLW-P1DMWA-1) (Polynucleobacter necessarius subsp. asymbioticus).